A 466-amino-acid polypeptide reads, in one-letter code: Ribulose bisphosphate carboxylase large chain (466 aa).

Lysine 5 is modified (N6,N6,N6-trimethyllysine). Residues asparagine 114 and threonine 164 each coordinate substrate. Catalysis depends on lysine 166, which acts as the Proton acceptor. Position 168 (lysine 168) interacts with substrate. Mg(2+) contacts are provided by lysine 192, aspartate 194, and glutamate 195. The residue at position 192 (lysine 192) is an N6-carboxylysine. Histidine 285 acts as the Proton acceptor in catalysis. The substrate site is built by arginine 286, histidine 318, and serine 370.

The protein belongs to the RuBisCO large chain family. Type I subfamily. In terms of assembly, heterohexadecamer of 8 large chains and 8 small chains; disulfide-linked. The disulfide link is formed within the large subunit homodimers. Mg(2+) serves as cofactor. In terms of processing, the disulfide bond which can form in the large chain dimeric partners within the hexadecamer appears to be associated with oxidative stress and protein turnover.

It is found in the plastid. It localises to the chloroplast. The enzyme catalyses 2 (2R)-3-phosphoglycerate + 2 H(+) = D-ribulose 1,5-bisphosphate + CO2 + H2O. The catalysed reaction is D-ribulose 1,5-bisphosphate + O2 = 2-phosphoglycolate + (2R)-3-phosphoglycerate + 2 H(+). Functionally, ruBisCO catalyzes two reactions: the carboxylation of D-ribulose 1,5-bisphosphate, the primary event in carbon dioxide fixation, as well as the oxidative fragmentation of the pentose substrate in the photorespiration process. Both reactions occur simultaneously and in competition at the same active site. The chain is Ribulose bisphosphate carboxylase large chain from Aesculus pavia (Red buckeye).